A 304-amino-acid chain; its full sequence is Oxygen-dependent coproporphyrinogen-III oxidase (304 aa).

Residue Ser94 coordinates substrate. Positions 98 and 108 each coordinate a divalent metal cation. The Proton donor role is filled by His108. 110–112 (NVR) lines the substrate pocket. Residues His147 and His177 each coordinate a divalent metal cation. Positions 242 to 277 (YVEFNLVYDRGTLFGLQTGGRTESILMSMPPLVRWE) are important for dimerization. 260–262 (GGR) lines the substrate pocket.

Belongs to the aerobic coproporphyrinogen-III oxidase family. In terms of assembly, homodimer. Requires a divalent metal cation as cofactor.

The protein localises to the cytoplasm. It catalyses the reaction coproporphyrinogen III + O2 + 2 H(+) = protoporphyrinogen IX + 2 CO2 + 2 H2O. It participates in porphyrin-containing compound metabolism; protoporphyrin-IX biosynthesis; protoporphyrinogen-IX from coproporphyrinogen-III (O2 route): step 1/1. Functionally, involved in the heme biosynthesis. Catalyzes the aerobic oxidative decarboxylation of propionate groups of rings A and B of coproporphyrinogen-III to yield the vinyl groups in protoporphyrinogen-IX. This is Oxygen-dependent coproporphyrinogen-III oxidase from Shewanella halifaxensis (strain HAW-EB4).